The chain runs to 66 residues: Regulator of G-protein signaling 6 (66 aa).

Positions 1 to 66 (LAVQDLKKQP…EDAQEHIYKL (66 aa)) constitute an RGS domain.

Interacts with GNB5. Interacts with RGS7BP, leading to regulate the subcellular location of the heterodimer formed with GNB5. Interacts with GNAI1.

Its subcellular location is the cytoplasm. It is found in the cytosol. The protein localises to the membrane. It localises to the nucleus. The protein resides in the cell membrane. Its function is as follows. Regulates G protein-coupled receptor signaling cascades. Inhibits signal transduction by increasing the GTPase activity of G protein alpha subunits, thereby driving them into their inactive GDP-bound form. The RGS6/GNB5 dimer enhances GNAO1 GTPase activity. The chain is Regulator of G-protein signaling 6 (Rgs6) from Rattus norvegicus (Rat).